A 280-amino-acid chain; its full sequence is 2-dehydro-3-deoxyphosphooctonate aldolase (280 aa).

The protein belongs to the KdsA family.

It localises to the cytoplasm. The catalysed reaction is D-arabinose 5-phosphate + phosphoenolpyruvate + H2O = 3-deoxy-alpha-D-manno-2-octulosonate-8-phosphate + phosphate. It functions in the pathway carbohydrate biosynthesis; 3-deoxy-D-manno-octulosonate biosynthesis; 3-deoxy-D-manno-octulosonate from D-ribulose 5-phosphate: step 2/3. The protein operates within bacterial outer membrane biogenesis; lipopolysaccharide biosynthesis. This chain is 2-dehydro-3-deoxyphosphooctonate aldolase, found in Neisseria meningitidis serogroup A / serotype 4A (strain DSM 15465 / Z2491).